The primary structure comprises 182 residues: Ribosome maturation factor RimM (182 aa).

The PRC barrel domain occupies 103-182 (EGDYYWKDLM…SIEVDWDPGF (80 aa)).

It belongs to the RimM family. Binds ribosomal protein uS19.

The protein localises to the cytoplasm. Its function is as follows. An accessory protein needed during the final step in the assembly of 30S ribosomal subunit, possibly for assembly of the head region. Essential for efficient processing of 16S rRNA. May be needed both before and after RbfA during the maturation of 16S rRNA. It has affinity for free ribosomal 30S subunits but not for 70S ribosomes. This chain is Ribosome maturation factor RimM, found in Escherichia coli O139:H28 (strain E24377A / ETEC).